Here is a 53-residue protein sequence, read N- to C-terminus: UPF0391 membrane protein Bcen2424_6479 (53 aa).

Helical transmembrane passes span 5-25 (AIIF…GIAA) and 30-50 (IAKI…LLGV).

Belongs to the UPF0391 family.

It localises to the cell membrane. The sequence is that of UPF0391 membrane protein Bcen2424_6479 from Burkholderia cenocepacia (strain HI2424).